The following is a 115-amino-acid chain: NADH-ubiquinone oxidoreductase chain 3 (115 aa).

A run of 3 helical transmembrane segments spans residues 3–23, 55–75, and 86–106; these read LMLT…IAFW, FFLV…LLPL, and TMLT…AYEW.

It belongs to the complex I subunit 3 family. Core subunit of respiratory chain NADH dehydrogenase (Complex I) which is composed of 45 different subunits. Interacts with TMEM186. Interacts with TMEM242.

It is found in the mitochondrion inner membrane. The enzyme catalyses a ubiquinone + NADH + 5 H(+)(in) = a ubiquinol + NAD(+) + 4 H(+)(out). Its function is as follows. Core subunit of the mitochondrial membrane respiratory chain NADH dehydrogenase (Complex I) which catalyzes electron transfer from NADH through the respiratory chain, using ubiquinone as an electron acceptor. Essential for the catalytic activity of complex I. The protein is NADH-ubiquinone oxidoreductase chain 3 of Ceratotherium simum (White rhinoceros).